Consider the following 120-residue polypeptide: MIVFSKYKTFWFFLIIGAIIPTLAFTTSKLLAPTVTTPEKKTSYESGIEPIGEAWIQFQIRYYMFALVFVIFDVETIFLYPWAMSFDQLGVYGFIEALIFVLILVIGLVYAWRKGALEWS.

The next 3 helical transmembrane spans lie at 10–30 (FWFFLIIGAIIPTLAFTTSKL), 64–84 (MFALVFVIFDVETIFLYPWAM), and 89–109 (LGVYGFIEALIFVLILVIGLV).

Belongs to the complex I subunit 3 family. As to quaternary structure, NDH is composed of at least 16 different subunits, 5 of which are encoded in the nucleus.

The protein localises to the plastid. The protein resides in the chloroplast thylakoid membrane. It catalyses the reaction a plastoquinone + NADH + (n+1) H(+)(in) = a plastoquinol + NAD(+) + n H(+)(out). The enzyme catalyses a plastoquinone + NADPH + (n+1) H(+)(in) = a plastoquinol + NADP(+) + n H(+)(out). Its function is as follows. NDH shuttles electrons from NAD(P)H:plastoquinone, via FMN and iron-sulfur (Fe-S) centers, to quinones in the photosynthetic chain and possibly in a chloroplast respiratory chain. The immediate electron acceptor for the enzyme in this species is believed to be plastoquinone. Couples the redox reaction to proton translocation, and thus conserves the redox energy in a proton gradient. In Chaetosphaeridium globosum (Charophycean green alga), this protein is NAD(P)H-quinone oxidoreductase subunit 3, chloroplastic.